The sequence spans 412 residues: Peptidase T (412 aa).

A Zn(2+)-binding site is contributed by H84. Residue D86 is part of the active site. D146 is a binding site for Zn(2+). The active-site Proton acceptor is E179. Positions 180, 202, and 385 each coordinate Zn(2+).

It belongs to the peptidase M20B family. It depends on Zn(2+) as a cofactor.

Its subcellular location is the cytoplasm. The enzyme catalyses Release of the N-terminal residue from a tripeptide.. Cleaves the N-terminal amino acid of tripeptides. The polypeptide is Peptidase T (Haemophilus influenzae (strain PittGG)).